A 492-amino-acid chain; its full sequence is GMP reductase (492 aa).

Residues 30-31 (SR) and Arg78 contribute to the NADP(+) site. 2 consecutive CBS domains span residues 99-162 (LIED…LVET) and 164-223 (MTPV…RNAT). NADP(+) is bound by residues 260–262 (DIA) and 313–314 (VG). K(+) is bound by residues Gly314, Gly316, and Cys319. The Thioimidate intermediate role is filled by Cys319. Catalysis depends on Thr321, which acts as the Proton donor/acceptor. Arg322 contacts K(+). GMP-binding positions include 352–354 (DGG), 375–376 (GN), and 401–403 (GMA). NADP(+) is bound by residues Met402 and 454-457 (SGIS). Positions 490–492 (SKL) match the Microbody targeting signal motif.

It belongs to the IMPDH/GMPR family. GuaC type 1 subfamily. As to quaternary structure, homotetramer.

Its subcellular location is the glycosome. It catalyses the reaction IMP + NH4(+) + NADP(+) = GMP + NADPH + 2 H(+). Its activity is regulated as follows. Activated by GTP and inhibited by XMP and the IMP analogs allopurinol nucleotide and thiopurinol nucleotide. Its function is as follows. Catalyzes the irreversible NADPH-dependent deamination of GMP to IMP. It functions in the conversion of nucleobase, nucleoside and nucleotide derivatives of G to A nucleotides, and in maintaining the intracellular balance of A and G nucleotides. This chain is GMP reductase, found in Leishmania donovani.